The following is a 339-amino-acid chain: Biotin synthase (339 aa).

Residues 55-282 (NAVQLSTLLS…KAVVRLSAGR (228 aa)) form the Radical SAM core domain. Residues Cys-70, Cys-74, and Cys-77 each contribute to the [4Fe-4S] cluster site. The [2Fe-2S] cluster site is built by Cys-114, Cys-145, Cys-205, and Arg-277.

Belongs to the radical SAM superfamily. Biotin synthase family. As to quaternary structure, homodimer. It depends on [4Fe-4S] cluster as a cofactor. [2Fe-2S] cluster serves as cofactor.

The catalysed reaction is (4R,5S)-dethiobiotin + (sulfur carrier)-SH + 2 reduced [2Fe-2S]-[ferredoxin] + 2 S-adenosyl-L-methionine = (sulfur carrier)-H + biotin + 2 5'-deoxyadenosine + 2 L-methionine + 2 oxidized [2Fe-2S]-[ferredoxin]. It functions in the pathway cofactor biosynthesis; biotin biosynthesis; biotin from 7,8-diaminononanoate: step 2/2. In terms of biological role, catalyzes the conversion of dethiobiotin (DTB) to biotin by the insertion of a sulfur atom into dethiobiotin via a radical-based mechanism. The polypeptide is Biotin synthase (Burkholderia ambifaria (strain MC40-6)).